Here is a 2149-residue protein sequence, read N- to C-terminus: Oxygen-regulated protein 1 (2149 aa).

Positions 1–20 (MSDTPSTGFSMIHPTSSEGQ) are enriched in polar residues. A disordered region spans residues 1-25 (MSDTPSTGFSMIHPTSSEGQVPSPR). Residues 36–118 (KRISFYKSGD…GRKVQPVDLD (83 aa)) form the Doublecortin 1 domain. The interval 127-148 (WLSSRAVSTHAPPHSVAAPGMP) is disordered. In terms of domain architecture, Doublecortin 2 spans 152–231 (RSLVVFRNGD…REPFKPGNYD (80 aa)). 3 disordered regions span residues 351-373 (VSKTGPSNNDEKSEMSFPGRTES), 1435-1456 (MEEPRTSEEPGSVTNSVTSSER), and 1583-1613 (VTSDWSDYRPDSDSEQAYKTSSDDPNDSGEL). The segment covering 1446–1456 (SVTNSVTSSER) has biased composition (polar residues).

As to quaternary structure, interacts (via the doublecortin domains) with microtubules. Interacts with RP1L1. Interacts with MAK.

Its subcellular location is the cytoplasm. The protein resides in the cytoskeleton. It localises to the cilium axoneme. It is found in the cell projection. The protein localises to the cilium. Its subcellular location is the photoreceptor outer segment. In terms of biological role, microtubule-associated protein regulating the stability and length of the microtubule-based axoneme of photoreceptors. Required for the differentiation of photoreceptor cells, it plays a role in the organization of the outer segment of rod and cone photoreceptors ensuring the correct orientation and higher-order stacking of outer segment disks along the photoreceptor axoneme. The sequence is that of Oxygen-regulated protein 1 (RP1) from Saimiri boliviensis boliviensis (Bolivian squirrel monkey).